Here is a 274-residue protein sequence, read N- to C-terminus: DNA-directed RNA polymerase subunit Rpo3 (274 aa).

[3Fe-4S] cluster contacts are provided by cysteine 202, cysteine 205, and cysteine 208.

It belongs to the archaeal Rpo3/eukaryotic RPB3 RNA polymerase subunit family. In terms of assembly, part of the RNA polymerase complex. It depends on [3Fe-4S] cluster as a cofactor.

Its subcellular location is the cytoplasm. The enzyme catalyses RNA(n) + a ribonucleoside 5'-triphosphate = RNA(n+1) + diphosphate. Functionally, DNA-dependent RNA polymerase (RNAP) catalyzes the transcription of DNA into RNA using the four ribonucleoside triphosphates as substrates. The polypeptide is DNA-directed RNA polymerase subunit Rpo3 (Methanobrevibacter smithii (strain ATCC 35061 / DSM 861 / OCM 144 / PS)).